The chain runs to 359 residues: Peptide chain release factor 1 (359 aa).

An N5-methylglutamine modification is found at Gln236.

Belongs to the prokaryotic/mitochondrial release factor family. In terms of processing, methylated by PrmC. Methylation increases the termination efficiency of RF1.

The protein resides in the cytoplasm. Peptide chain release factor 1 directs the termination of translation in response to the peptide chain termination codons UAG and UAA. This chain is Peptide chain release factor 1, found in Streptococcus pyogenes serotype M1.